The sequence spans 421 residues: Vinorine synthase (421 aa).

Active-site proton acceptor residues include histidine 160 and aspartate 362.

The protein belongs to the plant acyltransferase family. Monomer. In terms of tissue distribution, mainly expressed in roots and, to a lower level, in leaves.

The catalysed reaction is 16-epivellosimine + acetyl-CoA = vinorine + CoA. Its pathway is alkaloid biosynthesis; ajmaline biosynthesis. With respect to regulation, complete inhibition by 4-(2-aminoethyl)-benzenesulfonyl fluoride (AEBSF), N-tosyl-L-phenylalanine chloromethylketone (TPCK), Hg(2+) and diethyl-pyrocarbonate (DEPC). 50% inhibition by N-(N-(L-3-trans-carboxirane-2-carbonyl)-L-leucyl)-agmanitine (E-64), N-alpha-p-tosyl-L-lysine chloromethylketone (TLCK) and phenylmethylsulfonyl fluoride (PMSF). Acetyltransferase involved in the biosynthesis of ajmaline-type monoterpenoid indole alkaloids (MIAs) natural products, important plant-derived pharmaceuticals used in the therapy of heart disorders. Catalyzes the conversion of 16-epivellosimine to vinorine, precursor of vomilenine, an intermediate chemical in the biosynthesis of ajmaline. Acts on gardneral, but not on polyneuridine aldehyde or N-methylgardneral. The chain is Vinorine synthase from Rauvolfia serpentina (Serpentine wood).